A 238-amino-acid polypeptide reads, in one-letter code: Probable transcriptional regulatory protein SSP2054 (238 aa).

This sequence belongs to the TACO1 family. YeeN subfamily.

The protein resides in the cytoplasm. This chain is Probable transcriptional regulatory protein SSP2054, found in Staphylococcus saprophyticus subsp. saprophyticus (strain ATCC 15305 / DSM 20229 / NCIMB 8711 / NCTC 7292 / S-41).